The sequence spans 153 residues: MSNQLNTMDIKEILKYLPHRYPFLLIDRVLDFTRGESLHAIKNVTINEPFFQGHFPVQPVMPGVLILEAMAQATGLLAFKTMSEEPSPNVLYYFAGIDKARFKRVVGPGDQIHFHVKMIKERRGIGVFIGEAYVDGELACSAEIMCARREISK.

Residue His-54 is part of the active site.

This sequence belongs to the thioester dehydratase family. FabZ subfamily.

The protein localises to the cytoplasm. The catalysed reaction is a (3R)-hydroxyacyl-[ACP] = a (2E)-enoyl-[ACP] + H2O. Functionally, involved in unsaturated fatty acids biosynthesis. Catalyzes the dehydration of short chain beta-hydroxyacyl-ACPs and long chain saturated and unsaturated beta-hydroxyacyl-ACPs. This chain is 3-hydroxyacyl-[acyl-carrier-protein] dehydratase FabZ, found in Shewanella denitrificans (strain OS217 / ATCC BAA-1090 / DSM 15013).